Here is a 366-residue protein sequence, read N- to C-terminus: Probable S-adenosyl-L-methionine-binding protein AF_0433 (366 aa).

The 131-residue stretch at 6 to 136 folds into the TsaA-like domain; sequence LRQVGVIRSP…YSSTIDSVGN (131 aa). S-adenosyl-L-methionine-binding positions include 23 to 25, 61 to 62, arginine 85, and 116 to 119; these read PHQ, DR, and LDGT.

Belongs to the tRNA methyltransferase O family.

In Archaeoglobus fulgidus (strain ATCC 49558 / DSM 4304 / JCM 9628 / NBRC 100126 / VC-16), this protein is Probable S-adenosyl-L-methionine-binding protein AF_0433.